Here is a 455-residue protein sequence, read N- to C-terminus: Chromosomal replication initiator protein DnaA (455 aa).

The interval 1–74 (MFNFEKFWQH…IQSAYGYAGV (74 aa)) is domain I, interacts with DnaA modulators. Residues 74–117 (VELLPVFQISEDSDTPERIVTPEPQHNLQTTPTRAPQREFAKDL) form a domain II region. The domain III, AAA+ region stretch occupies residues 118-334 (KLNEKYTFDN…GALVKVQAYA (217 aa)). 4 residues coordinate ATP: Gly-162, Gly-164, Lys-165, and Thr-166. Residues 335–455 (TIEKADIDIN…VFDLKQMLEH (121 aa)) are domain IV, binds dsDNA.

Belongs to the DnaA family. Oligomerizes as a right-handed, spiral filament on DNA at oriC.

It localises to the cytoplasm. Its function is as follows. Plays an essential role in the initiation and regulation of chromosomal replication. ATP-DnaA binds to the origin of replication (oriC) to initiate formation of the DNA replication initiation complex once per cell cycle. Binds the DnaA box (a 9 base pair repeat at the origin) and separates the double-stranded (ds)DNA. Forms a right-handed helical filament on oriC DNA; dsDNA binds to the exterior of the filament while single-stranded (ss)DNA is stabiized in the filament's interior. The ATP-DnaA-oriC complex binds and stabilizes one strand of the AT-rich DNA unwinding element (DUE), permitting loading of DNA polymerase. After initiation quickly degrades to an ADP-DnaA complex that is not apt for DNA replication. Binds acidic phospholipids. This Lactobacillus acidophilus (strain ATCC 700396 / NCK56 / N2 / NCFM) protein is Chromosomal replication initiator protein DnaA.